A 191-amino-acid polypeptide reads, in one-letter code: METGDSAVKSSQDVHYYGKSTAQKHRRSNGIILIFRALTFSFSLTSVIVMGTNRHRIDAQSRVAWYDFDPFRYVLAVNAIICIYSFVEIWLAVYTYLKDTLFLPETFQVWFDYGHDQGFAYLLFSANSAGIAMAQLLQSGNSLIHGAYRCSDAGVFCTQARASIGLGFGAFLFLALSSLLTGLRVARWYFS.

Residues 1 to 29 are Cytoplasmic-facing; the sequence is METGDSAVKSSQDVHYYGKSTAQKHRRSN. Residues 30–50 form a helical membrane-spanning segment; sequence GIILIFRALTFSFSLTSVIVM. Residues 51–72 lie on the Extracellular side of the membrane; that stretch reads GTNRHRIDAQSRVAWYDFDPFR. A helical membrane pass occupies residues 73–93; sequence YVLAVNAIICIYSFVEIWLAV. At 94–116 the chain is on the cytoplasmic side; it reads YTYLKDTLFLPETFQVWFDYGHD. A helical transmembrane segment spans residues 117–137; sequence QGFAYLLFSANSAGIAMAQLL. Over 138 to 162 the chain is Extracellular; the sequence is QSGNSLIHGAYRCSDAGVFCTQARA. The helical transmembrane segment at 163 to 183 threads the bilayer; the sequence is SIGLGFGAFLFLALSSLLTGL. Topologically, residues 184–191 are cytoplasmic; the sequence is RVARWYFS.

It belongs to the Casparian strip membrane proteins (CASP) family. Homodimer and heterodimers.

The protein localises to the cell membrane. This chain is CASP-like protein 4C3, found in Physcomitrium patens (Spreading-leaved earth moss).